The primary structure comprises 966 residues: RNA polymerase-associated protein RapA (966 aa).

The Helicase ATP-binding domain maps to 163–337 (EVGRRIAPRV…FARLHLLDPN (175 aa)). 176–183 (DEVGLGKT) serves as a coordination point for ATP. Positions 283–286 (DEAH) match the DEAH box motif. Residues 489–643 (RVDWLINLVK…TCPMGAILHE (155 aa)) enclose the Helicase C-terminal domain.

It belongs to the SNF2/RAD54 helicase family. RapA subfamily. In terms of assembly, interacts with the RNAP. Has a higher affinity for the core RNAP than for the holoenzyme. Its ATPase activity is stimulated by binding to RNAP.

Its function is as follows. Transcription regulator that activates transcription by stimulating RNA polymerase (RNAP) recycling in case of stress conditions such as supercoiled DNA or high salt concentrations. Probably acts by releasing the RNAP, when it is trapped or immobilized on tightly supercoiled DNA. Does not activate transcription on linear DNA. Probably not involved in DNA repair. The sequence is that of RNA polymerase-associated protein RapA from Histophilus somni (strain 129Pt) (Haemophilus somnus).